Consider the following 424-residue polypeptide: Dehydrogenase FUM7 (424 aa).

This sequence belongs to the iron-containing alcohol dehydrogenase family. It depends on Fe cation as a cofactor.

The protein operates within mycotoxin biosynthesis. In terms of biological role, dehydrogenase; part of the gene cluster that mediates the biosynthesis of fumonisins B1 (FB1), B2 (FB2), B3 (FB3), and B4 (FB4), which are carcinogenic mycotoxins. Within the pathway, FUM7 is involved the addition of the tricarballylic moieties to the carbon backbone. FUM7 dehydrogenase removes the C-3 hydroxyl of citrate to form tricarballylic acid either before or after the CoA activation by the FUM10 acyl-CoA synthetase and FUM14 catalyzed esterification of CoA-activated tricarballylic acid to the C-14 and C-15 hydroxyls of the fumonisin backbone. The biosynthesis starts with the FUM1-catalyzed carbon chain assembly from one molecule of acetyl-CoA, eight molecules of malonyl-CoA, and two molecules of methionine (in S-adenosyl form). The C18 polyketide chain is released from the enzyme by a nucleophilic attack of a carbanion, which is derived from R-carbon of alanine by decarboxylation, on the carbonyl carbon of polyketide acyl chain. This step is catalyzed by the pyridoxal 5'-phosphate-dependent aminoacyl transferase FUM8. The resultant 3-keto intermediate is then stereospecifically reduced to a 3-hydroxyl product by reductase FUM13. Subsequent oxidations at C-10 by the cytochrome P450 monooxygenase FUM2, C-14 and C-15 by FUM6, FUM12 or FUM15, tricarballylic esterification of the hydroxyl groups on C-14 and C-15 by acyltransferase FUM14, and C-5 hydroxylation by 2-keto-glutarate-dependent dioxygenase FUM3 furnish the biosynthesis of fumonisins. The tricarballylic moieties are most likely derived from the citric acid cycle, and their addition to the carbon backbone may involve FUM7, FUM10, FUM11 and FUM14. The polypeptide is Dehydrogenase FUM7 (Gibberella moniliformis (strain M3125 / FGSC 7600) (Maize ear and stalk rot fungus)).